The primary structure comprises 354 residues: 3'-5' exonuclease (354 aa).

The segment at 1–120 is disordered; that stretch reads MERFLTKMPI…PSPEKEKPEK (120 aa). Composition is skewed to basic and acidic residues over residues 13–30 and 37–50; these read KANEVPKKEAVAKKETPK and KKDTPKELKDKENA. Residues 59–70 show a composition bias toward basic residues; that stretch reads TKGRPGRPAAKR. A compositionally biased stretch (basic and acidic residues) spans 71 to 91; it reads KNLDTPDVKDEKIAMEEENPP. Phosphoserine occurs at positions 104, 110, and 112. Residues 149 to 314 form the 3'-5' exonuclease domain; sequence WVEKQKDDVV…GQVIYRELER (166 aa). Mg(2+)-binding residues include aspartate 163, glutamate 165, and aspartate 301.

Belongs to the WRNexo family.

Its subcellular location is the nucleus. Has exonuclease activity on both single-stranded and duplex templates bearing overhangs, but not blunt ended duplex DNA, and cleaves in a 3'-5' direction. Essential for the formation of DNA replication focal centers. Has an important role in maintaining genome stability. This is 3'-5' exonuclease from Drosophila simulans (Fruit fly).